A 201-amino-acid polypeptide reads, in one-letter code: MAIGYPNGKKYAASQEELPQQKRKAPVTYGKRGMSLEDDLNDTIAYYLTHEIAVIHKKPTPVQIVSVDYPKRSSAKIKEAYFKTPSTTDYNGVYKGKYVDFEAKETQNTTSFPLSNFHDHQMTHMANVLKQDGIVFVIIAFQKLGETHFIPFEKFYPFWERMQSGGRKSVTIAEIQDVSDQIPYGLNPRLDFLQSIDKLYF.

The tract at residues 1 to 26 (MAIGYPNGKKYAASQEELPQQKRKAP) is disordered. Residues T87, D89, E102, and Q121 each coordinate Mg(2+).

Belongs to the RecU family. Mg(2+) serves as cofactor.

Its subcellular location is the cytoplasm. The catalysed reaction is Endonucleolytic cleavage at a junction such as a reciprocal single-stranded crossover between two homologous DNA duplexes (Holliday junction).. Functionally, endonuclease that resolves Holliday junction intermediates in genetic recombination. Cleaves mobile four-strand junctions by introducing symmetrical nicks in paired strands. Promotes annealing of linear ssDNA with homologous dsDNA. Required for DNA repair, homologous recombination and chromosome segregation. The polypeptide is Holliday junction resolvase RecU (Listeria monocytogenes serotype 4a (strain HCC23)).